We begin with the raw amino-acid sequence, 499 residues long: 3-beta-hydroxylase (499 aa).

A helical; Signal-anchor for type II membrane protein transmembrane segment spans residues 2–22; that stretch reads FSSFETLILSFVSLFFMMIFI. Cysteine 441 is a binding site for heme.

The protein belongs to the cytochrome P450 family. It depends on heme as a cofactor.

Its subcellular location is the membrane. It carries out the reaction (+)-costunolide + reduced [NADPH--hemoprotein reductase] + O2 = 3beta-hydroxycostunolide + oxidized [NADPH--hemoprotein reductase] + H2O + H(+). The enzyme catalyses parthenolide + reduced [NADPH--hemoprotein reductase] + O2 = 3beta-hydroxyparthenolide + oxidized [NADPH--hemoprotein reductase] + H2O + H(+). Its pathway is secondary metabolite biosynthesis; terpenoid biosynthesis. Its function is as follows. Involved in the biosynthesis of germacrene-derived sesquiterpene lactones. Component of the parthenolide biosynthetic pathway; parthenolide and conjugates are promising anti-cancer drugs highly active against colon cancer cells. Catalyzes the conversion of costunolide and parthenolide to 3-beta-hydroxycostunolide and 3-beta-hydroxyparthenolide, respectively. In Tanacetum parthenium (Feverfew), this protein is 3-beta-hydroxylase.